Reading from the N-terminus, the 162-residue chain is Onchocystatin (162 aa).

An N-terminal signal peptide occupies residues 1 to 32 (MLTIKDGTLLIHLLLFSVVALVQLQGAKSARA). Residues 30-54 (ARAKNPSKMESKTGENQDRPVLLGG) are disordered. Residues 36-47 (SKMESKTGENQD) show a composition bias toward basic and acidic residues. Residues 97 to 101 (QVVAG) carry the Secondary area of contact motif. Cys115 and Cys128 are oxidised to a cystine.

This sequence belongs to the cystatin family. As to expression, expressed in the cuticle of L3 and L4 larvae, female adult, and in the eggshell of developing microfilariae.

Functionally, cysteine protease inhibitor which inhibits members of the peptidase C1 family. In the human host, inhibits CTSL/cathepsin L and CTSS/cathepsin S and to a lesser extent CTSB/cathepsin B which may cause defects in antigen processing and thereby impair antigen-driven T cell proliferation. The polypeptide is Onchocystatin (Onchocerca volvulus).